The primary structure comprises 397 residues: Iron-sulfur cluster assembly SufBD family protein Rv1462 (397 aa).

At threonine 2 the chain carries N-acetylthreonine.

Belongs to the iron-sulfur cluster assembly SufBD family.

The chain is Iron-sulfur cluster assembly SufBD family protein Rv1462 from Mycobacterium tuberculosis (strain ATCC 25618 / H37Rv).